The following is a 474-amino-acid chain: Aspartyl/glutamyl-tRNA(Asn/Gln) amidotransferase subunit B (474 aa).

It belongs to the GatB/GatE family. GatB subfamily. As to quaternary structure, heterotrimer of A, B and C subunits.

It carries out the reaction L-glutamyl-tRNA(Gln) + L-glutamine + ATP + H2O = L-glutaminyl-tRNA(Gln) + L-glutamate + ADP + phosphate + H(+). The catalysed reaction is L-aspartyl-tRNA(Asn) + L-glutamine + ATP + H2O = L-asparaginyl-tRNA(Asn) + L-glutamate + ADP + phosphate + 2 H(+). Functionally, allows the formation of correctly charged Asn-tRNA(Asn) or Gln-tRNA(Gln) through the transamidation of misacylated Asp-tRNA(Asn) or Glu-tRNA(Gln) in organisms which lack either or both of asparaginyl-tRNA or glutaminyl-tRNA synthetases. The reaction takes place in the presence of glutamine and ATP through an activated phospho-Asp-tRNA(Asn) or phospho-Glu-tRNA(Gln). The protein is Aspartyl/glutamyl-tRNA(Asn/Gln) amidotransferase subunit B of Helicobacter hepaticus (strain ATCC 51449 / 3B1).